The primary structure comprises 107 residues: UPF0145 protein YbjQ (107 aa).

This sequence belongs to the UPF0145 family.

This is UPF0145 protein YbjQ from Escherichia coli (strain SMS-3-5 / SECEC).